We begin with the raw amino-acid sequence, 186 residues long: Peptidyl-tRNA hydrolase (186 aa).

Tyrosine 14 contributes to the tRNA binding site. Histidine 19 acts as the Proton acceptor in catalysis. 3 residues coordinate tRNA: tyrosine 61, asparagine 63, and asparagine 107.

Belongs to the PTH family. Monomer.

Its subcellular location is the cytoplasm. It carries out the reaction an N-acyl-L-alpha-aminoacyl-tRNA + H2O = an N-acyl-L-amino acid + a tRNA + H(+). Functionally, hydrolyzes ribosome-free peptidyl-tRNAs (with 1 or more amino acids incorporated), which drop off the ribosome during protein synthesis, or as a result of ribosome stalling. Its function is as follows. Catalyzes the release of premature peptidyl moieties from peptidyl-tRNA molecules trapped in stalled 50S ribosomal subunits, and thus maintains levels of free tRNAs and 50S ribosomes. This Helicobacter pylori (strain HPAG1) protein is Peptidyl-tRNA hydrolase.